Reading from the N-terminus, the 359-residue chain is Peptide chain release factor 1 (359 aa).

Gln232 carries the post-translational modification N5-methylglutamine.

It belongs to the prokaryotic/mitochondrial release factor family. Methylated by PrmC. Methylation increases the termination efficiency of RF1.

The protein localises to the cytoplasm. Its function is as follows. Peptide chain release factor 1 directs the termination of translation in response to the peptide chain termination codons UAG and UAA. In Lawsonia intracellularis (strain PHE/MN1-00), this protein is Peptide chain release factor 1.